The chain runs to 451 residues: MTKKRKLESESNETSEPTEKQQQQCEKEDPEIRNVDNQRDDDEQVVEQDTLKEMHEEEAKGEDNIEAETSSGSGNQGNEDDDEEEPIEDLLEPFSKDQLLILLKEAAERHRDVANRIRIVADEDLVHRKIFVHGLGWDTKADSLIDAFKQYGEIEDCKCVVDKVSGQSKGYGFILFKSRSGARNALKQPQKKIGTRMTACQLASIGPVQGNPVVAPAQHFNPENVQRKIYVSNVSADIDPQKLLEFFSRFGEIEEGPLGLDKATGRPKGFALFVYRSLESAKKALEEPHKTFEGHVLHCHKANDGPKQVKQHQHNHNSHNQNSRYQRNDNNGYGAPGGHGHFIAGNNQAVQAFNPAIGQALTALLASQGAGLGLNQAFGQALLGTLGTASPGAVGGMPSGYGTQANISPGVYPGYGAQAGYQGGYQTQQPGQGGAGRGQHGAGYGGPYMGR.

The tract at residues 1–86 is disordered; that stretch reads MTKKRKLESE…GNEDDDEEEP (86 aa). 2 stretches are compositionally biased toward basic and acidic residues: residues 25–38 and 49–63; these read CEKE…VDNQ and DTLK…KGED. Over residues 67-77 the composition is skewed to polar residues; it reads AETSSGSGNQG. RRM domains are found at residues 128–236 and 227–314; these read RKIF…NVSA and RKIY…QHQH. Disordered stretches follow at residues 302–335 and 423–451; these read ANDG…GYGA and GGYQ…YMGR. The span at 431–451 shows a compositional bias: gly residues; it reads GQGGAGRGQHGAGYGGPYMGR.

As to expression, expressed in shoot meristem and flowers.

It is found in the nucleus. Heterogeneous nuclear ribonucleoprotein (hnRNP)-like protein that acts as a component of a complex regulating the turnover of mRNAs in the nucleus. Binds with high affinity to RNA molecules that contain U-rich sequences in 3'-UTRs. May function in complex with UBP1 and contribute to the stabilization of mRNAs in the nucleus. This is UBP1-associated protein 2B (UBA2B) from Arabidopsis thaliana (Mouse-ear cress).